Consider the following 274-residue polypeptide: MSSSNENAKAQAPEKSDFTRRCSLLSRYLKEKGSFGNIDLGLYRKPDSSLALPGKFDPPGKQNAMHKAGHSKGEPSTSSGGKVKDVADLSESQPGSSQLTIFFGGKVLVYNEFPVDKAKEIMEVAKQAKPVTEINIQTPINDENNNNKSSMVLPDLNEPTDNNHLTKEQQQQQEQNQIVERIARRASLHRFFAKRKDRAVARAPYQVNQNAGHHRYPPKPEIVTGQPLEAGQSSQRPPDNAIGQTMAHIKSDGDKDDIMKIEEGQSSKDLDLRL.

Disordered stretches follow at residues 49-95 and 139-176; these read SLAL…SQPG and PIND…QEQN. Positions 92–127 constitute a Tify domain; it reads SQPGSSQLTIFFGGKVLVYNEFPVDKAKEIMEVAKQ. The span at 139-150 shows a compositional bias: polar residues; it reads PINDENNNNKSS. Positions 161-185 form a coiled coil; sequence DNNHLTKEQQQQQEQNQIVERIARR. A Jas motif is present at residues 182–206; it reads IARRASLHRFFAKRKDRAVARAPYQ. Positions 183-190 match the Nuclear localization signal motif; that stretch reads ARRASLHR. Residues 206 to 274 are disordered; that stretch reads QVNQNAGHHR…QSSKDLDLRL (69 aa). The segment covering 249-274 has biased composition (basic and acidic residues); it reads IKSDGDKDDIMKIEEGQSSKDLDLRL.

This sequence belongs to the TIFY/JAZ family. In terms of assembly, homo- and heterodimer. Interacts with MYC2, MYC3, MYC4, AFPH2/NINJA, TIFY10A/JAZ1, TIFY10B/JAZ2, TIFY11B/JAZ6, TIFY5A/JAZ8 and TIFY3B/JAZ12. As to quaternary structure, (Microbial infection) Interacts with the pathogenic Pseudomonas syringae HopZ1a protein. (Microbial infection) Acetylated by Pseudomonas syringae HopZ1a. In terms of processing, ubiquitinated. Targeted for degradation by the SCF(COI1) E3 ubiquitin ligase-proteasome pathway during jasmonate signaling.

It is found in the nucleus. Repressor of jasmonate responses. This Arabidopsis thaliana (Mouse-ear cress) protein is Protein TIFY 11A.